The following is a 352-amino-acid chain: Photosystem II D2 protein (352 aa).

A helical membrane pass occupies residues 40–60 (CAFMALGGWLTGTTFVTSWYT). Residue His-117 participates in chlorophyll a binding. Residues 124 to 140 (GFMLRQFEIARLVGIRP) form a helical membrane-spanning segment. Residues Gln-129 and Asn-142 each coordinate pheophytin a. A helical membrane pass occupies residues 152–165 (VFVSVFLMYPLGQS). His-197 is a binding site for chlorophyll a. Residues 207–227 (GALLCAIHGATVENTLFEDSD) form a helical membrane-spanning segment. His-214 and Phe-261 together coordinate a plastoquinone. His-214 contributes to the Fe cation binding site. His-268 contacts Fe cation. Residues 278 to 294 (GLWMSSVGIVGLALNLR) traverse the membrane as a helical segment.

It belongs to the reaction center PufL/M/PsbA/D family. PSII is composed of 1 copy each of membrane proteins PsbA, PsbB, PsbC, PsbD, PsbE, PsbF, PsbH, PsbI, PsbJ, PsbK, PsbL, PsbM, PsbT, PsbX, PsbY, PsbZ, Psb30/Ycf12, peripheral proteins PsbO, CyanoQ (PsbQ), PsbU, PsbV and a large number of cofactors. It forms dimeric complexes. The D1/D2 heterodimer binds P680, chlorophylls that are the primary electron donor of PSII, and subsequent electron acceptors. It shares a non-heme iron and each subunit binds pheophytin, quinone, additional chlorophylls, carotenoids and lipids. There is also a Cl(-1) ion associated with D1 and D2, which is required for oxygen evolution. The PSII complex binds additional chlorophylls, carotenoids and specific lipids. is required as a cofactor.

It is found in the cellular thylakoid membrane. It carries out the reaction 2 a plastoquinone + 4 hnu + 2 H2O = 2 a plastoquinol + O2. Its function is as follows. Photosystem II (PSII) is a light-driven water:plastoquinone oxidoreductase that uses light energy to abstract electrons from H(2)O, generating O(2) and a proton gradient subsequently used for ATP formation. It consists of a core antenna complex that captures photons, and an electron transfer chain that converts photonic excitation into a charge separation. The D1/D2 (PsbA/PsbD) reaction center heterodimer binds P680, the primary electron donor of PSII as well as several subsequent electron acceptors. D2 is needed for assembly of a stable PSII complex. This chain is Photosystem II D2 protein, found in Picosynechococcus sp. (strain ATCC 27264 / PCC 7002 / PR-6) (Agmenellum quadruplicatum).